A 473-amino-acid chain; its full sequence is Bifunctional protein HldE (473 aa).

A ribokinase region spans residues 1-318 (MKLSMPRFDQ…RAIQREEGSE (318 aa)). 194–197 (NLSE) is an ATP binding site. D263 is an active-site residue. The tract at residues 343–473 (FTNGCFDILH…TAIVEKIRKH (131 aa)) is cytidylyltransferase.

This sequence in the N-terminal section; belongs to the carbohydrate kinase PfkB family. It in the C-terminal section; belongs to the cytidylyltransferase family. In terms of assembly, homodimer.

The enzyme catalyses D-glycero-beta-D-manno-heptose 7-phosphate + ATP = D-glycero-beta-D-manno-heptose 1,7-bisphosphate + ADP + H(+). The catalysed reaction is D-glycero-beta-D-manno-heptose 1-phosphate + ATP + H(+) = ADP-D-glycero-beta-D-manno-heptose + diphosphate. Its pathway is nucleotide-sugar biosynthesis; ADP-L-glycero-beta-D-manno-heptose biosynthesis; ADP-L-glycero-beta-D-manno-heptose from D-glycero-beta-D-manno-heptose 7-phosphate: step 1/4. The protein operates within nucleotide-sugar biosynthesis; ADP-L-glycero-beta-D-manno-heptose biosynthesis; ADP-L-glycero-beta-D-manno-heptose from D-glycero-beta-D-manno-heptose 7-phosphate: step 3/4. Catalyzes the phosphorylation of D-glycero-D-manno-heptose 7-phosphate at the C-1 position to selectively form D-glycero-beta-D-manno-heptose-1,7-bisphosphate. Its function is as follows. Catalyzes the ADP transfer from ATP to D-glycero-beta-D-manno-heptose 1-phosphate, yielding ADP-D-glycero-beta-D-manno-heptose. The polypeptide is Bifunctional protein HldE (Pseudomonas entomophila (strain L48)).